Reading from the N-terminus, the 34-residue chain is MSDIN-like toxin proprotein 3 (34 aa).

The propeptide occupies 1–10; it reads MSDINVIRAP. Residues 11 to 18 constitute a cross-link (cyclopeptide (Leu-Pro)); the sequence is LLILSILP. Residues 19–34 constitute a propeptide that is removed on maturation; sequence CVGDDIEVLRRGEGLS.

Belongs to the MSDIN fungal toxin family. In terms of processing, processed by the macrocyclase-peptidase enzyme POPB to yield a toxic cyclic octapeptide. POPB first removes 10 residues from the N-terminus. Conformational trapping of the remaining peptide forces the enzyme to release this intermediate rather than proceed to macrocyclization. The enzyme rebinds the remaining peptide in a different conformation and catalyzes macrocyclization of the N-terminal 8 residues. As to expression, expressed in basidiocarps.

Probable toxin that belongs to the MSDIN-like toxin family responsible for a large number of food poisoning cases and deaths. In Amanita exitialis (Guangzhou destroying angel), this protein is MSDIN-like toxin proprotein 3.